Here is a 373-residue protein sequence, read N- to C-terminus: Homoserine O-acetyltransferase (373 aa).

Residues 52-356 form the AB hydrolase-1 domain; sequence NVVMVLHALT…VYGHDGFLVE (305 aa). Residue serine 157 is the Nucleophile of the active site. Arginine 227 serves as a coordination point for substrate. Catalysis depends on residues aspartate 320 and histidine 350. Substrate is bound at residue aspartate 351.

Belongs to the AB hydrolase superfamily. MetX family. In terms of assembly, homodimer.

Its subcellular location is the cytoplasm. The enzyme catalyses L-homoserine + acetyl-CoA = O-acetyl-L-homoserine + CoA. It participates in amino-acid biosynthesis; L-methionine biosynthesis via de novo pathway; O-acetyl-L-homoserine from L-homoserine: step 1/1. Transfers an acetyl group from acetyl-CoA to L-homoserine, forming acetyl-L-homoserine. The sequence is that of Homoserine O-acetyltransferase from Mycobacterium sp. (strain KMS).